A 281-amino-acid polypeptide reads, in one-letter code: LIM domain-containing protein G (281 aa).

LIM zinc-binding domains are found at residues 40-101 (LNCS…IKFN), 141-205 (DICT…SKQV), and 206-262 (NCFA…FTQP).

This is LIM domain-containing protein G (limG) from Dictyostelium discoideum (Social amoeba).